Consider the following 30-residue polypeptide: Beta-endorphin-2 (30 aa).

Tyr-1 is modified (N-acetyltyrosine).

Belongs to the POMC family.

It localises to the secreted. The polypeptide is Beta-endorphin-2 (Oncorhynchus keta (Chum salmon)).